The sequence spans 163 residues: Probable cobalt-precorrin-6B C(15)-methyltransferase (decarboxylating) (163 aa).

Residues Thr6, 30-34 (GCGSG), Asp51, and Gly75 contribute to the S-adenosyl-L-methionine site.

The protein belongs to the methyltransferase superfamily. Archaeal-type CbiT family.

It carries out the reaction Co-precorrin-6B + S-adenosyl-L-methionine = Co-precorrin-7 + S-adenosyl-L-homocysteine + CO2. The protein operates within cofactor biosynthesis; adenosylcobalamin biosynthesis; cob(II)yrinate a,c-diamide from sirohydrochlorin (anaerobic route): step 8/10. Functionally, catalyzes the methylation of C-15 in cobalt-precorrin-6B followed by the decarboxylation of C-12 to form cobalt-precorrin-7. This is Probable cobalt-precorrin-6B C(15)-methyltransferase (decarboxylating) from Archaeoglobus fulgidus (strain ATCC 49558 / DSM 4304 / JCM 9628 / NBRC 100126 / VC-16).